The primary structure comprises 565 residues: Maturase K (565 aa).

The protein belongs to the intron maturase 2 family. MatK subfamily.

It is found in the plastid. Its subcellular location is the chloroplast. In terms of biological role, usually encoded in the trnK tRNA gene intron. Probably assists in splicing its own and other chloroplast group II introns. The chain is Maturase K from Staurastrum punctulatum (Green alga).